The primary structure comprises 619 residues: Probable transporter mch1 (619 aa).

Transmembrane regions (helical) follow at residues 88–108 (VISC…PLFL), 120–140 (AVSI…GYLC), 147–167 (PLAL…AFAY), 184–204 (VMVV…LAAV), 219–239 (IMLA…SQVA), 261–281 (FLFL…GLRI), 377–397 (TMWW…AYIN), 428–448 (IIAL…DFFA), 480–500 (LAFL…LSSP), 515–535 (LIGL…SVVW), 541–561 (GTNW…WGVI), and 589–609 (FWAV…ILAW).

Belongs to the major facilitator superfamily.

It is found in the vacuole membrane. Its function is as follows. Probable transporter. In Aspergillus fumigatus (strain ATCC MYA-4609 / CBS 101355 / FGSC A1100 / Af293) (Neosartorya fumigata), this protein is Probable transporter mch1 (mch1).